An 80-amino-acid chain; its full sequence is Conotoxin Cl11.2 (80 aa).

Residues 1–19 (MKMSVTFLLILMILPLFTG) form the signal peptide. Residues 20–41 (EWQSGSRLSALKKRLLEKRLLQ) constitute a propeptide that is removed on maturation. 4 disulfide bridges follow: Cys-45/Cys-59, Cys-52/Cys-63, Cys-58/Cys-68, and Cys-62/Cys-74.

The protein belongs to the conotoxin I1 superfamily. Expressed by the venom duct.

The protein resides in the secreted. This is Conotoxin Cl11.2 from Californiconus californicus (California cone).